A 134-amino-acid chain; its full sequence is Small ribosomal subunit protein uS11 (134 aa).

Positions 115–134 (TPIPHNGTRPPKKVLKRDLK) are disordered. Positions 124–134 (PPKKVLKRDLK) are enriched in basic residues.

It belongs to the universal ribosomal protein uS11 family. In terms of assembly, part of the 30S ribosomal subunit. Interacts with proteins S7 and S18. Binds to IF-3.

Functionally, located on the platform of the 30S subunit, it bridges several disparate RNA helices of the 16S rRNA. Forms part of the Shine-Dalgarno cleft in the 70S ribosome. This Mycoplasma mobile (strain ATCC 43663 / 163K / NCTC 11711) (Mesomycoplasma mobile) protein is Small ribosomal subunit protein uS11.